We begin with the raw amino-acid sequence, 1715 residues long: Rho guanine nucleotide exchange factor TIAM2 (1715 aa).

Composition is skewed to polar residues over residues 1–22 (MGNSESQYTFQGSKNHSNTVTG) and 218–229 (GSPSSQRPSPTD). Disordered stretches follow at residues 1-27 (MGNSESQYTFQGSKNHSNTVTGAKQKP), 174-249 (FHNG…WYDS), 263-294 (SFLAPSTPDPSLPSSFPPSDTKKPFNQSSSLS), and 385-418 (TGSLSRKKRKLQEPRSMEGSEYFDSHSDGLNAEG). Gly-2 carries N-myristoyl glycine lipidation. The span at 235–245 (SKGSSLSSESS) shows a compositional bias: low complexity. Residues 395–411 (LQEPRSMEGSEYFDSHS) are compositionally biased toward basic and acidic residues. A PH 1 domain is found at 504-618 (VVRKAGWLFF…WVTAIHSACA (115 aa)). Positions 665–692 (PKNRKAIENQIRQWEQNLEKFHMDLFRM) form a coiled coil. The RBD domain maps to 831 to 902 (VQTYVHFQDN…YMQEQVYDEI (72 aa)). One can recognise a PDZ domain in the interval 911–997 (DVQLTKTGDM…GLTLVARPVT (87 aa)). Positions 1092 to 1113 (THTNSMEAPTESHDPPPRPLAR) are disordered. One can recognise a DH domain in the interval 1120–1314 (RLRKVIQELV…EKVASHINEM (195 aa)). In terms of domain architecture, PH 2 spans 1347–1478 (LLMHSTVSWL…KVIRSILREN (132 aa)). The interval 1515–1582 (SLKGLRTSSS…EGLAEFPDGL (68 aa)) is disordered. Residues 1522 to 1532 (SSSSEWPSEPS) are compositionally biased toward low complexity. Polar residues predominate over residues 1533–1552 (KGNSLDSDECSLSSGTQSSG). Residues 1557–1572 (ESRRDSKSTELEKDAQ) are compositionally biased toward basic and acidic residues. Ser-1604 carries the phosphoserine modification. Phosphothreonine is present on Thr-1662.

This sequence belongs to the TIAM family. Interacts with MAP1A, MAP1B, PARP1 and YWHAE. Interacts with CD44, PARD3 and MAPK8IP2. Post-translationally, phosphorylated on serine and threonine residues. Phosphorylated on Thr-1662 by Rho-kinase. Its phosphorylation by Rho-kinase inhibits its guanine nucleotide exchange activity, its interaction with MAP1A, MAP1B, PARP1 and YWHAE and reduces its ability to promote neurite growth. Expressed in fetal brain (at protein level). Expressed in the olfactory bulb, cortical plate of the cerebral cortex, caudate putamen, hippocampus, ependymal cells of the lateral surface of the lateral ventricles of the brain. Weakly expressed in heart, lung, liver, skeletal muscle, kidney and testis.

The protein localises to the cytoplasm. The protein resides in the cell projection. It is found in the lamellipodium. It localises to the filopodium. Its subcellular location is the growth cone. The protein localises to the neuron projection. The protein resides in the perikaryon. Modulates the activity of RHO-like proteins and connects extracellular signals to cytoskeletal activities. Acts as a GDP-dissociation stimulator protein that stimulates the GDP-GTP exchange activity of RHO-like GTPases and activates them. Activates specifically RAC1, but not CDC42 and RHOA. Mediates extracellular laminin signals to activate Rac1, contributing to neurite growth. Involved in lamellipodial formation and advancement of the growth cone of embryonic hippocampal neurons. Promotes migration of neurons in the cerebral cortex. When overexpressed, induces membrane ruffling accompanied by the accumulation of actin filaments along the altered plasma membrane. The polypeptide is Rho guanine nucleotide exchange factor TIAM2 (Mus musculus (Mouse)).